A 402-amino-acid polypeptide reads, in one-letter code: Enoyl-[acyl-carrier-protein] reductase [NADH] (402 aa).

NAD(+) is bound by residues 48-53 (GASSGY), 74-75 (FE), 111-112 (DA), and 140-141 (LA). Residue Tyr226 participates in substrate binding. Tyr236 (proton donor) is an active-site residue. NAD(+)-binding positions include Lys245 and 274-276 (VVT).

This sequence belongs to the TER reductase family. Monomer.

It carries out the reaction a 2,3-saturated acyl-[ACP] + NAD(+) = a (2E)-enoyl-[ACP] + NADH + H(+). The protein operates within lipid metabolism; fatty acid biosynthesis. Involved in the final reduction of the elongation cycle of fatty acid synthesis (FAS II). Catalyzes the reduction of a carbon-carbon double bond in an enoyl moiety that is covalently linked to an acyl carrier protein (ACP). This chain is Enoyl-[acyl-carrier-protein] reductase [NADH], found in Xanthomonas axonopodis pv. citri (strain 306).